An 860-amino-acid chain; its full sequence is Leucine--tRNA ligase (860 aa).

The short motif at 42–52 (PYPSGRLHMGH) is the 'HIGH' region element. The 'KMSKS' region motif lies at 619–623 (KMSKS). An ATP-binding site is contributed by K622.

This sequence belongs to the class-I aminoacyl-tRNA synthetase family.

It localises to the cytoplasm. The catalysed reaction is tRNA(Leu) + L-leucine + ATP = L-leucyl-tRNA(Leu) + AMP + diphosphate. The chain is Leucine--tRNA ligase from Erwinia tasmaniensis (strain DSM 17950 / CFBP 7177 / CIP 109463 / NCPPB 4357 / Et1/99).